The primary structure comprises 354 residues: HRDYEIVLEGGSSSWGKVKARAKVNVPPASPLLPADCNVKLNVKPLDPAKGFVRISAVFESIVDSTKNKLTIEADIANETKERRISVGEGMVSVGGFSHSFSFEGSVVNMFYYRSDAVRRNVPNPIYRQGRQFHDILMKVPLDNNDLIDTWEGTVRAIGSTGTFNDWIRDFWFIGPAFTALNEGGQRISRIEVNGLNTESGPKGPVGVSRWRFSHGGSGMVDSISRWAELFPFDKLNRPAQVEAGFRSDSQGIEVKVDGEFPGVSVDAGGGLRRILNHPLIPLVHHGMVGKFNNFNVDAQLKVVLPKGYKVRYAAPQYRSQNLEEYRWSGGAYARWVEHVCKGGVGQFEVLYAQ.

Bacteriochlorophyll a-binding residues include His-99, His-134, His-278, His-285, and His-286.

In terms of assembly, homotrimer. Each subunit contains 7 molecules of bacteriochlorophyll a.

Functionally, intermediary in the transfer of excitation energy from the chlorophyll to the reaction centers. The sequence is that of Bacteriochlorophyll a protein (fmoA) from Chlorobaculum thiosulfatiphilum (Chlorobium limicola f.sp. thiosulfatophilum).